We begin with the raw amino-acid sequence, 436 residues long: D-aminoacyl-tRNA deacylase (436 aa).

The protein belongs to the DtdA deacylase family. As to quaternary structure, monomer. The cofactor is Zn(2+).

It catalyses the reaction a D-aminoacyl-tRNA + H2O = a tRNA + a D-alpha-amino acid + H(+). It carries out the reaction glycyl-tRNA(Ala) + H2O = tRNA(Ala) + glycine + H(+). D-aminoacyl-tRNA deacylase with broad substrate specificity. By recycling D-aminoacyl-tRNA to D-amino acids and free tRNA molecules, this enzyme counteracts the toxicity associated with the formation of D-aminoacyl-tRNA entities in vivo. The chain is D-aminoacyl-tRNA deacylase from Methanoregula boonei (strain DSM 21154 / JCM 14090 / 6A8).